The sequence spans 400 residues: Elongation factor Tu 2 (400 aa).

The region spanning 10–209 is the tr-type G domain; it reads KPHLNIGTIG…AVDSYIPLPQ (200 aa). Positions 19–26 are G1; that stretch reads GHIDHGKT. 19–26 serves as a coordination point for GTP; it reads GHIDHGKT. Mg(2+) is bound at residue Thr-26. Residues 60–64 are G2; sequence GITIN. Residues 81–84 form a G3 region; sequence DCPG. GTP contacts are provided by residues 81–85 and 136–139; these read DCPGH and NKID. The G4 stretch occupies residues 136–139; that stretch reads NKID. The tract at residues 174–176 is G5; the sequence is SAL.

Belongs to the TRAFAC class translation factor GTPase superfamily. Classic translation factor GTPase family. EF-Tu/EF-1A subfamily. As to quaternary structure, monomer.

Its subcellular location is the cytoplasm. The catalysed reaction is GTP + H2O = GDP + phosphate + H(+). GTP hydrolase that promotes the GTP-dependent binding of aminoacyl-tRNA to the A-site of ribosomes during protein biosynthesis. In Syntrophomonas wolfei subsp. wolfei (strain DSM 2245B / Goettingen), this protein is Elongation factor Tu 2.